The following is a 98-amino-acid chain: NADH-ubiquinone oxidoreductase chain 4L (98 aa).

The next 3 helical transmembrane spans lie at 1 to 21 (MSPL…GLAF), 26 to 46 (LISA…PLSI), and 56 to 76 (FALV…TGLA).

This sequence belongs to the complex I subunit 4L family. As to quaternary structure, core subunit of respiratory chain NADH dehydrogenase (Complex I) which is composed of 45 different subunits.

The protein localises to the mitochondrion inner membrane. It carries out the reaction a ubiquinone + NADH + 5 H(+)(in) = a ubiquinol + NAD(+) + 4 H(+)(out). Functionally, core subunit of the mitochondrial membrane respiratory chain NADH dehydrogenase (Complex I) which catalyzes electron transfer from NADH through the respiratory chain, using ubiquinone as an electron acceptor. Part of the enzyme membrane arm which is embedded in the lipid bilayer and involved in proton translocation. The chain is NADH-ubiquinone oxidoreductase chain 4L (MT-ND4L) from Gallus gallus (Chicken).